The following is a 95-amino-acid chain: Protein TusB (95 aa).

It belongs to the DsrH/TusB family. In terms of assembly, heterohexamer, formed by a dimer of trimers. The hexameric TusBCD complex contains 2 copies each of TusB, TusC and TusD. The TusBCD complex interacts with TusE.

The protein resides in the cytoplasm. Functionally, part of a sulfur-relay system required for 2-thiolation of 5-methylaminomethyl-2-thiouridine (mnm(5)s(2)U) at tRNA wobble positions. In Buchnera aphidicola subsp. Acyrthosiphon pisum (strain 5A), this protein is Protein TusB.